The sequence spans 548 residues: Undecaprenyl phosphate-alpha-4-amino-4-deoxy-L-arabinose arabinosyl transferase 1 (548 aa).

The next 12 membrane-spanning stretches (helical) occupy residues 11–31 (WLLF…TRLL), 89–109 (IVVV…AMVV), 114–134 (ALAF…AIGT), 137–157 (ILDP…LVAL), 180–200 (FLTK…VMAI), 214–234 (IALL…ALQA), 263–283 (FYIP…FGAL), 292–312 (GTLY…ASKG), 314–334 (LLTY…HYIE), 347–367 (VNAS…IYSL), 382–402 (KIVL…GALF), and 405–425 (TQFL…YAIP).

This sequence belongs to the glycosyltransferase 83 family.

Its subcellular location is the cell inner membrane. The catalysed reaction is 4-amino-4-deoxy-alpha-L-arabinopyranosyl di-trans,octa-cis-undecaprenyl phosphate + lipid IVA = lipid IIA + di-trans,octa-cis-undecaprenyl phosphate.. It functions in the pathway lipopolysaccharide metabolism; 4-amino-4-deoxy-beta-L-arabinose-lipid A biosynthesis. Catalyzes the transfer of the L-Ara4N moiety of the glycolipid undecaprenyl phosphate-alpha-L-Ara4N to lipid A. The modified arabinose is attached to lipid A and is required for resistance to polymyxin and cationic antimicrobial peptides. The chain is Undecaprenyl phosphate-alpha-4-amino-4-deoxy-L-arabinose arabinosyl transferase 1 from Proteus mirabilis (strain HI4320).